Reading from the N-terminus, the 156-residue chain is Peptide deformylase (156 aa).

Residues Cys90 and His132 each contribute to the Fe cation site. Residue Glu133 is part of the active site. His136 is a Fe cation binding site.

Belongs to the polypeptide deformylase family. Fe(2+) serves as cofactor.

The catalysed reaction is N-terminal N-formyl-L-methionyl-[peptide] + H2O = N-terminal L-methionyl-[peptide] + formate. Removes the formyl group from the N-terminal Met of newly synthesized proteins. Requires at least a dipeptide for an efficient rate of reaction. N-terminal L-methionine is a prerequisite for activity but the enzyme has broad specificity at other positions. This is Peptide deformylase from Natranaerobius thermophilus (strain ATCC BAA-1301 / DSM 18059 / JW/NM-WN-LF).